The chain runs to 351 residues: Serine/threonine-protein kinase mos (351 aa).

Positions 71 to 340 (FSIDGVIGSG…ERRTDDTENL (270 aa)) constitute a Protein kinase domain. ATP-binding positions include 77 to 85 (IGSGGFGSV) and Lys-98. Catalysis depends on Asp-194, which acts as the Proton acceptor.

It belongs to the protein kinase superfamily. Ser/Thr protein kinase family.

It catalyses the reaction L-seryl-[protein] + ATP = O-phospho-L-seryl-[protein] + ADP + H(+). The enzyme catalyses L-threonyl-[protein] + ATP = O-phospho-L-threonyl-[protein] + ADP + H(+). In terms of biological role, suppresses the mitotic cell cycle in oocytes, forcing them to undergo meiosis II to produce haploid gametes. Acts as a MAPK kinase kinase (MAP3K) that acts upstream of MAP kinase in oocytes. This chain is Serine/threonine-protein kinase mos, found in Patiria pectinifera (Starfish).